The sequence spans 120 residues: Large ribosomal subunit protein bL17 (120 aa).

It belongs to the bacterial ribosomal protein bL17 family. As to quaternary structure, part of the 50S ribosomal subunit. Contacts protein L32.

The chain is Large ribosomal subunit protein bL17 from Bacillus velezensis (strain DSM 23117 / BGSC 10A6 / LMG 26770 / FZB42) (Bacillus amyloliquefaciens subsp. plantarum).